Reading from the N-terminus, the 463-residue chain is Bifunctional protein HldE (463 aa).

Residues 1–315 are ribokinase; it reads MKKILVIGDL…LILNQTHPKI (315 aa). 191–194 contributes to the ATP binding site; it reads NRAE. The active site involves Asp-260. The tract at residues 334 to 463 is cytidylyltransferase; sequence FTNGCFDLLH…IEKIKRTHND (130 aa).

It in the N-terminal section; belongs to the carbohydrate kinase PfkB family. The protein in the C-terminal section; belongs to the cytidylyltransferase family. In terms of assembly, homodimer.

The enzyme catalyses D-glycero-beta-D-manno-heptose 7-phosphate + ATP = D-glycero-beta-D-manno-heptose 1,7-bisphosphate + ADP + H(+). It catalyses the reaction D-glycero-beta-D-manno-heptose 1-phosphate + ATP + H(+) = ADP-D-glycero-beta-D-manno-heptose + diphosphate. Its pathway is nucleotide-sugar biosynthesis; ADP-L-glycero-beta-D-manno-heptose biosynthesis; ADP-L-glycero-beta-D-manno-heptose from D-glycero-beta-D-manno-heptose 7-phosphate: step 1/4. It participates in nucleotide-sugar biosynthesis; ADP-L-glycero-beta-D-manno-heptose biosynthesis; ADP-L-glycero-beta-D-manno-heptose from D-glycero-beta-D-manno-heptose 7-phosphate: step 3/4. Its function is as follows. Catalyzes the phosphorylation of D-glycero-D-manno-heptose 7-phosphate at the C-1 position to selectively form D-glycero-beta-D-manno-heptose-1,7-bisphosphate. Functionally, catalyzes the ADP transfer from ATP to D-glycero-beta-D-manno-heptose 1-phosphate, yielding ADP-D-glycero-beta-D-manno-heptose. The protein is Bifunctional protein HldE of Helicobacter pylori (strain HPAG1).